Consider the following 88-residue polypeptide: Large ribosomal subunit protein eL34 (88 aa).

A disordered region spans residues 41–72 (RPLNGIPRGRPNELRKLPKTKKRPERPMPNLC).

Belongs to the eukaryotic ribosomal protein eL34 family.

The chain is Large ribosomal subunit protein eL34 from Thermococcus sibiricus (strain DSM 12597 / MM 739).